Reading from the N-terminus, the 467-residue chain is NADH-quinone oxidoreductase subunit H (467 aa).

Transmembrane regions (helical) follow at residues 18–38 (WWLVVIKAVFCFAFLMVTVLF), 88–108 (AVYVLAPIVAAIPAFMAIAVI), 131–151 (LPIAMLFILAVASVGIYGIVL), 172–192 (MISYEIAMGAAFASVFLYSGS), 206–226 (WYIVLLPVSFILYIVTMVGET), 256–276 (FMLAEYVNMVTVSAVATTLFL), 296–316 (WWPLLWFVVKVQLLLFFFIWL), 328–348 (LMKLGWKVLIPVSLVWLMLVA), and 363–383 (IALYIGGGVLVLLLLSFLVDM). The interval 389 to 467 (GKAADQPAET…PTDGKEASDG (79 aa)) is disordered. Pro residues predominate over residues 418–430 (PVPPMPGQQVPPV).

Belongs to the complex I subunit 1 family. In terms of assembly, NDH-1 is composed of 14 different subunits. Subunits NuoA, H, J, K, L, M, N constitute the membrane sector of the complex.

Its subcellular location is the cell membrane. It catalyses the reaction a quinone + NADH + 5 H(+)(in) = a quinol + NAD(+) + 4 H(+)(out). In terms of biological role, NDH-1 shuttles electrons from NADH, via FMN and iron-sulfur (Fe-S) centers, to quinones in the respiratory chain. The immediate electron acceptor for the enzyme in this species is believed to be ubiquinone. Couples the redox reaction to proton translocation (for every two electrons transferred, four hydrogen ions are translocated across the cytoplasmic membrane), and thus conserves the redox energy in a proton gradient. This subunit may bind ubiquinone. In Streptomyces coelicolor (strain ATCC BAA-471 / A3(2) / M145), this protein is NADH-quinone oxidoreductase subunit H.